Reading from the N-terminus, the 155-residue chain is Large ribosomal subunit protein uL22 (155 aa).

This sequence belongs to the universal ribosomal protein uL22 family. Part of the 50S ribosomal subunit. Contacts the macrolide antibiotic tylosin in the polypeptide exit tunnel.

Its function is as follows. This protein binds specifically to 23S rRNA. It makes multiple contacts with different domains of the 23S rRNA in the assembled 50S subunit and ribosome. Functionally, contacts all 6 domains of the 23S rRNA, helping stabilize their relative orientation. An extended beta-hairpin in the C-terminus forms part of the polypeptide exit tunnel, in which it helps forms a bend with protein L4, while most of the rest of the protein is located at the polypeptide exit tunnel on the outside of the subunit. This is Large ribosomal subunit protein uL22 from Haloarcula marismortui (strain ATCC 43049 / DSM 3752 / JCM 8966 / VKM B-1809) (Halobacterium marismortui).